The sequence spans 156 residues: Small ribosomal subunit protein uS7 (156 aa).

It belongs to the universal ribosomal protein uS7 family. As to quaternary structure, part of the 30S ribosomal subunit. Contacts proteins S9 and S11.

Its function is as follows. One of the primary rRNA binding proteins, it binds directly to 16S rRNA where it nucleates assembly of the head domain of the 30S subunit. Is located at the subunit interface close to the decoding center, probably blocks exit of the E-site tRNA. This chain is Small ribosomal subunit protein uS7, found in Deinococcus geothermalis (strain DSM 11300 / CIP 105573 / AG-3a).